The chain runs to 215 residues: Probable transaldolase (215 aa).

Lysine 83 functions as the Schiff-base intermediate with substrate in the catalytic mechanism.

This sequence belongs to the transaldolase family. Type 3B subfamily.

The protein localises to the cytoplasm. The catalysed reaction is D-sedoheptulose 7-phosphate + D-glyceraldehyde 3-phosphate = D-erythrose 4-phosphate + beta-D-fructose 6-phosphate. It functions in the pathway carbohydrate degradation; pentose phosphate pathway; D-glyceraldehyde 3-phosphate and beta-D-fructose 6-phosphate from D-ribose 5-phosphate and D-xylulose 5-phosphate (non-oxidative stage): step 2/3. In terms of biological role, transaldolase is important for the balance of metabolites in the pentose-phosphate pathway. This Methanococcus maripaludis (strain C5 / ATCC BAA-1333) protein is Probable transaldolase.